The sequence spans 119 residues: Autophagy-related protein 8c (119 aa).

A lipid anchor (Phosphatidylethanolamine amidated glycine) is attached at Gly117. Positions 118-119 are cleaved as a propeptide — removed in mature form; the sequence is LV.

Belongs to the ATG8 family. Interacts with ATG4. Interacts with NBR1. The C-terminal 2 residues are removed by ATG4 to expose Gly-117 at the C-terminus. This Gly-117 forms then a thioester bond with the 'Cys-558' of ATG7 (E1-like activating enzyme) before being transferred to the 'Cys-258' of ATG3 (the specific E2 conjugating enzyme), in order to be finally amidated with phosphatidylethanolamine. This lipid modification anchors ATG8 to autophagosomes. In terms of tissue distribution, constitutively expressed.

It is found in the cytoplasmic vesicle. It localises to the autophagosome membrane. The protein localises to the vacuole membrane. The protein resides in the cytoplasm. Its subcellular location is the cytoskeleton. Its function is as follows. Ubiquitin-like modifier involved in autophagosomes formation. May mediate the delivery of the autophagosomes to the vacuole via the microtubule cytoskeleton. This Arabidopsis thaliana (Mouse-ear cress) protein is Autophagy-related protein 8c (ATG8C).